The chain runs to 457 residues: Bifunctional protein GlmU (457 aa).

The interval 1–228 (MEELVSVILA…SEEIIGVNSR (228 aa)) is pyrophosphorylase. UDP-N-acetyl-alpha-D-glucosamine contacts are provided by residues 9–12 (LAAG), Lys-23, Gln-73, and 78–79 (GT). Asp-102 lines the Mg(2+) pocket. Residues Gly-139, Glu-154, Asn-169, and Asn-226 each contribute to the UDP-N-acetyl-alpha-D-glucosamine site. Position 226 (Asn-226) interacts with Mg(2+). The segment at 229 to 249 (VQLSNAEKVMRRRINEKHMEN) is linker. Residues 250 to 457 (GVTIIDPDST…VEERIKKGRL (208 aa)) are N-acetyltransferase. Residues Arg-331 and Lys-349 each contribute to the UDP-N-acetyl-alpha-D-glucosamine site. His-361 functions as the Proton acceptor in the catalytic mechanism. 2 residues coordinate UDP-N-acetyl-alpha-D-glucosamine: Tyr-364 and Asn-375. Acetyl-CoA-binding positions include 384–385 (NY), Ala-421, and Arg-438.

It in the N-terminal section; belongs to the N-acetylglucosamine-1-phosphate uridyltransferase family. In the C-terminal section; belongs to the transferase hexapeptide repeat family. As to quaternary structure, homotrimer. It depends on Mg(2+) as a cofactor.

It localises to the cytoplasm. It catalyses the reaction alpha-D-glucosamine 1-phosphate + acetyl-CoA = N-acetyl-alpha-D-glucosamine 1-phosphate + CoA + H(+). It carries out the reaction N-acetyl-alpha-D-glucosamine 1-phosphate + UTP + H(+) = UDP-N-acetyl-alpha-D-glucosamine + diphosphate. The protein operates within nucleotide-sugar biosynthesis; UDP-N-acetyl-alpha-D-glucosamine biosynthesis; N-acetyl-alpha-D-glucosamine 1-phosphate from alpha-D-glucosamine 6-phosphate (route II): step 2/2. Its pathway is nucleotide-sugar biosynthesis; UDP-N-acetyl-alpha-D-glucosamine biosynthesis; UDP-N-acetyl-alpha-D-glucosamine from N-acetyl-alpha-D-glucosamine 1-phosphate: step 1/1. It functions in the pathway bacterial outer membrane biogenesis; LPS lipid A biosynthesis. Catalyzes the last two sequential reactions in the de novo biosynthetic pathway for UDP-N-acetylglucosamine (UDP-GlcNAc). The C-terminal domain catalyzes the transfer of acetyl group from acetyl coenzyme A to glucosamine-1-phosphate (GlcN-1-P) to produce N-acetylglucosamine-1-phosphate (GlcNAc-1-P), which is converted into UDP-GlcNAc by the transfer of uridine 5-monophosphate (from uridine 5-triphosphate), a reaction catalyzed by the N-terminal domain. The polypeptide is Bifunctional protein GlmU (Caldanaerobacter subterraneus subsp. tengcongensis (strain DSM 15242 / JCM 11007 / NBRC 100824 / MB4) (Thermoanaerobacter tengcongensis)).